Here is a 77-residue protein sequence, read N- to C-terminus: DNA-directed RNA polymerase subunit epsilon (77 aa).

This sequence belongs to the RNA polymerase subunit epsilon family. In terms of assembly, RNAP is composed of a core of 2 alpha, a beta and a beta' subunit. The core is associated with a delta subunit, and at least one of epsilon or omega. When a sigma factor is associated with the core the holoenzyme is formed, which can initiate transcription.

The enzyme catalyses RNA(n) + a ribonucleoside 5'-triphosphate = RNA(n+1) + diphosphate. Its function is as follows. A non-essential component of RNA polymerase (RNAP). In Streptococcus pneumoniae serotype 19F (strain G54), this protein is DNA-directed RNA polymerase subunit epsilon.